A 151-amino-acid chain; its full sequence is Peptide methionine sulfoxide reductase MsrB (151 aa).

One can recognise a MsrB domain in the interval 5–127 (KEERLKQLTR…NSAALRFVPK (123 aa)). Catalysis depends on Cys-116, which acts as the Nucleophile.

Belongs to the MsrB Met sulfoxide reductase family.

It catalyses the reaction L-methionyl-[protein] + [thioredoxin]-disulfide + H2O = L-methionyl-(R)-S-oxide-[protein] + [thioredoxin]-dithiol. This chain is Peptide methionine sulfoxide reductase MsrB, found in Bacillus licheniformis (strain ATCC 14580 / DSM 13 / JCM 2505 / CCUG 7422 / NBRC 12200 / NCIMB 9375 / NCTC 10341 / NRRL NRS-1264 / Gibson 46).